Here is an 80-residue protein sequence, read N- to C-terminus: Exodeoxyribonuclease 7 small subunit (80 aa).

It belongs to the XseB family. Heterooligomer composed of large and small subunits.

The protein localises to the cytoplasm. It catalyses the reaction Exonucleolytic cleavage in either 5'- to 3'- or 3'- to 5'-direction to yield nucleoside 5'-phosphates.. Its function is as follows. Bidirectionally degrades single-stranded DNA into large acid-insoluble oligonucleotides, which are then degraded further into small acid-soluble oligonucleotides. This Pseudomonas fluorescens (strain ATCC BAA-477 / NRRL B-23932 / Pf-5) protein is Exodeoxyribonuclease 7 small subunit.